Reading from the N-terminus, the 1026-residue chain is Leucine-rich repeat and coiled-coil domain-containing protein 1 (1026 aa).

5 LRR repeats span residues 39-60 (SIHA…DHIW), 61-82 (NLRH…NTLT), 83-104 (KLCT…EALV), 105-126 (NLTK…MPLH), and 131-152 (KLRY…LQCT). Residues 170 to 212 (NPICLIPGYRAIILQTLPQLRILDCKNIFGEPVSLEEINSSHL) enclose the LRRCT domain. Residues 310–338 (DNVPEKDLRPKRDTDITSESDYGNRRECS) form a disordered region. Basic and acidic residues predominate over residues 312–324 (VPEKDLRPKRDTD). Residues 428-641 (REMRWKAEQT…DLENEFRIAL (214 aa)) are a coiled coil.

It belongs to the LRRCC1 family.

It localises to the cytoplasm. It is found in the cytoskeleton. Its subcellular location is the microtubule organizing center. The protein resides in the centrosome. The protein localises to the centriole. Required for the organization of the mitotic spindle. Maintains the structural integrity of centrosomes during mitosis. The chain is Leucine-rich repeat and coiled-coil domain-containing protein 1 (Lrrcc1) from Mus musculus (Mouse).